Reading from the N-terminus, the 298-residue chain is Apolipoprotein E (298 aa).

The first 18 residues, 1 to 18 (MKVLWAALVVTLLAGCRA), serve as a signal peptide directing secretion. 8 consecutive repeat copies span residues 74–95 (LLIEDTMKEVKAYKAELEKELG), 96–117 (PVAEDTKARLAKELQAAQARLG), 118–139 (ADMEEVRNRLSQYRSEVQAMLG), 140–161 (QSSEELRARLTSHPRKMKRRLQ), 162–183 (RDIDELQKRMAVYKAGAQEGAE), 184–204 (RGVSAIRERLGSLIEQGRLQA), 205–222 (LASQPLQERAQAWGEQMR), and 223–244 (GRLEKVGSQARDRLEEVREQME). The tract at residues 74–244 (LLIEDTMKEV…RLEEVREQME (171 aa)) is 8 X 22 AA approximate tandem repeats. Methionine sulfoxide is present on Met137. The residue at position 141 (Ser141) is a Phosphoserine. The interval 152-162 (HPRKMKRRLQR) is LDL and other lipoprotein receptors binding. 156 to 159 (MKRR) serves as a coordination point for heparin. Position 218 to 225 (218 to 225 (GEQMRGRL)) interacts with heparin. Residues 260–272 (RLKSWFEPMMEDM) form a specificity for association with VLDL region.

The protein belongs to the apolipoprotein A1/A4/E family. As to quaternary structure, homotetramer. May interact with ABCA1; functionally associated with ABCA1 in the biogenesis of HDLs. May interact with APP/A4 amyloid-beta peptide; the interaction is extremely stable in vitro but its physiological significance is unclear. May interact with MAPT. May interact with MAP2. In the cerebrospinal fluid, interacts with secreted SORL1. Interacts with PMEL; this allows the loading of PMEL luminal fragment on ILVs to induce fibril nucleation. Post-translationally, APOE exists as multiple glycosylated and sialylated glycoforms within cells and in plasma. The extent of glycosylation and sialylation are tissue and context specific. In terms of processing, glycated in plasma VLDL. Phosphorylated by FAM20C in the extracellular medium.

The protein localises to the secreted. It localises to the extracellular space. The protein resides in the extracellular matrix. It is found in the extracellular vesicle. Its subcellular location is the endosome. The protein localises to the multivesicular body. In terms of biological role, APOE is an apolipoprotein, a protein associating with lipid particles, that mainly functions in lipoprotein-mediated lipid transport between organs via the plasma and interstitial fluids. APOE is a core component of plasma lipoproteins and is involved in their production, conversion and clearance. Apolipoproteins are amphipathic molecules that interact both with lipids of the lipoprotein particle core and the aqueous environment of the plasma. As such, APOE associates with chylomicrons, chylomicron remnants, very low density lipoproteins (VLDL) and intermediate density lipoproteins (IDL) but shows a preferential binding to high-density lipoproteins (HDL). It also binds a wide range of cellular receptors including the LDL receptor/LDLR and the very low-density lipoprotein receptor/VLDLR that mediate the cellular uptake of the APOE-containing lipoprotein particles. Finally, APOE also has a heparin-binding activity and binds heparan-sulfate proteoglycans on the surface of cells, a property that supports the capture and the receptor-mediated uptake of APOE-containing lipoproteins by cells. The polypeptide is Apolipoprotein E (APOE) (Cavia porcellus (Guinea pig)).